We begin with the raw amino-acid sequence, 260 residues long: Phosphonates import ATP-binding protein PhnC 2 (260 aa).

Positions 4–245 (IQINKATKTY…KNTLRTIYQR (242 aa)) constitute an ABC transporter domain. ATP is bound at residue 37-44 (GPSGAGKS).

Belongs to the ABC transporter superfamily. Phosphonates importer (TC 3.A.1.9.1) family. In terms of assembly, the complex is composed of two ATP-binding proteins (PhnC), two transmembrane proteins (PhnE) and a solute-binding protein (PhnD).

The protein localises to the cell inner membrane. It carries out the reaction phosphonate(out) + ATP + H2O = phosphonate(in) + ADP + phosphate + H(+). Functionally, part of the ABC transporter complex PhnCDE involved in phosphonates import. Responsible for energy coupling to the transport system. This is Phosphonates import ATP-binding protein PhnC 2 from Trichodesmium erythraeum (strain IMS101).